The following is a 547-amino-acid chain: MFS-type transporter ltbE (547 aa).

The interval 1-23 (MEIAAETTGPAGVTTDVTNAEES) is disordered. 13 helical membrane-spanning segments follow: residues 33 to 53 (QGWALASLTVAFMSICLVLAI), 74 to 94 (DIGWYGSSYLIAQMALLPTCG), 104 to 124 (WVYCLSLAIFELGSIIAAVAP), 135 to 155 (ISGLGAAGLVSGTTTILSYCV), 165 to 185 (PIVLGMYNIGSAMGPLIGGSI), 195 to 215 (FIFWINLPFGAVALVLVWFTL), 240 to 260 (ATLLLGATTCLNLALQWGGIV), 267 to 287 (KVFGCLIGFGLLLITFLCLQW), 310 to 330 (GFMMLVQVAIVVQSYFWPIYF), 343 to 363 (INLLPLIISNSLSTLCAGSLA), 370 to 390 (VPFMWVGPLILATGGGLYQLV), 399 to 419 (WIGFQILSGVGYGCCSQMPIL), and 432 to 452 (TGLVMIMFFQMLGGALAPSVG). Asparagine 463 carries an N-linked (GlcNAc...) asparagine glycan. The helical transmembrane segment at 506-526 (VFWVGVATPALAWIASWAMEW) threads the bilayer.

This sequence belongs to the major facilitator superfamily. TCR/Tet family.

The protein resides in the cell membrane. MFS-type transporter; part of the gene cluster that mediates the biosynthesis of luteodienoside A, a glycosylated polyketide consisting of an unusual 1-O-beta-D-glucopyranosyl-myo-inositol (glucinol) ester of 3-hydroxy-2,2,4-trimethylocta-4,6-dienoic acid. LtbE is probably involved in the secretion of luteodienoside A. This Aspergillus luteorubrus protein is MFS-type transporter ltbE.